The primary structure comprises 460 residues: Cysteine--tRNA ligase (460 aa).

Residue Cys-28 coordinates Zn(2+). A 'HIGH' region motif is present at residues 30–40 (VTIYDLCHIGH). Cys-209, His-234, and Glu-238 together coordinate Zn(2+). Positions 266–270 (KMSKS) match the 'KMSKS' region motif. ATP is bound at residue Lys-269.

It belongs to the class-I aminoacyl-tRNA synthetase family. Monomer. It depends on Zn(2+) as a cofactor.

The protein resides in the cytoplasm. The enzyme catalyses tRNA(Cys) + L-cysteine + ATP = L-cysteinyl-tRNA(Cys) + AMP + diphosphate. The protein is Cysteine--tRNA ligase of Vibrio vulnificus (strain YJ016).